A 243-amino-acid polypeptide reads, in one-letter code: tRNA (guanine-N(7)-)-methyltransferase (243 aa).

S-adenosyl-L-methionine contacts are provided by E74, E99, D126, and D149. The active site involves D149. Residues K153, D185, and 221 to 224 (TKFE) each bind substrate.

It belongs to the class I-like SAM-binding methyltransferase superfamily. TrmB family.

It catalyses the reaction guanosine(46) in tRNA + S-adenosyl-L-methionine = N(7)-methylguanosine(46) in tRNA + S-adenosyl-L-homocysteine. The protein operates within tRNA modification; N(7)-methylguanine-tRNA biosynthesis. Its function is as follows. Catalyzes the formation of N(7)-methylguanine at position 46 (m7G46) in tRNA. In Psychromonas ingrahamii (strain DSM 17664 / CCUG 51855 / 37), this protein is tRNA (guanine-N(7)-)-methyltransferase.